The following is a 169-amino-acid chain: Copper-resistant cuproprotein CopI (169 aa).

Residues methionine 1–alanine 20 form the signal peptide. Cu(2+)-binding residues include histidine 98, cysteine 153, histidine 158, and methionine 163.

The protein belongs to the CopI family.

It localises to the periplasm. Its function is as follows. Involved in copper tolerance. Mediates copper tolerance in aerobiosis. May also mediate tolerance under anaerobiosis. Not required for virulence or colonization in the mouse model. The protein is Copper-resistant cuproprotein CopI of Vibrio cholerae serotype O1 (strain ATCC 39315 / El Tor Inaba N16961).